Consider the following 294-residue polypeptide: MIKIYNRKTKAYDVEQVAGLKYINWSYASPIGKSFLELFIKKKMFSKLYGNFCDSSLSKKKIKAFIDEFNIDMSLCNKNIDEFENFNDFFARTLTPEARPIDYSENILISPGDGRLSAFENIDLNKVVQIKGYTYSLKELIDDPKVAEEFEGGTCLILRLCPTDYHRFHFVDSGTCSESKKISGFYYSVNPIALNNVSELFCKNKREWSIFNSDNFGKILHVEVGATCVGTILQTYSPEKRVKKGEEKGYFKFGGSTTILFFKKDTIKIDSDIVEQTKLGFETKVNMGETIGNK.

Residues D113, H169, and S256 each act as charge relay system; for autoendoproteolytic cleavage activity in the active site. Residue S256 is the Schiff-base intermediate with substrate; via pyruvic acid; for decarboxylase activity of the active site. Position 256 is a pyruvic acid (Ser); by autocatalysis (S256).

This sequence belongs to the phosphatidylserine decarboxylase family. PSD-B subfamily. Prokaryotic type II sub-subfamily. As to quaternary structure, heterodimer of a large membrane-associated beta subunit and a small pyruvoyl-containing alpha subunit. Pyruvate serves as cofactor. Is synthesized initially as an inactive proenzyme. Formation of the active enzyme involves a self-maturation process in which the active site pyruvoyl group is generated from an internal serine residue via an autocatalytic post-translational modification. Two non-identical subunits are generated from the proenzyme in this reaction, and the pyruvate is formed at the N-terminus of the alpha chain, which is derived from the carboxyl end of the proenzyme. The autoendoproteolytic cleavage occurs by a canonical serine protease mechanism, in which the side chain hydroxyl group of the serine supplies its oxygen atom to form the C-terminus of the beta chain, while the remainder of the serine residue undergoes an oxidative deamination to produce ammonia and the pyruvoyl prosthetic group on the alpha chain. During this reaction, the Ser that is part of the protease active site of the proenzyme becomes the pyruvoyl prosthetic group, which constitutes an essential element of the active site of the mature decarboxylase.

The protein resides in the cell membrane. It carries out the reaction a 1,2-diacyl-sn-glycero-3-phospho-L-serine + H(+) = a 1,2-diacyl-sn-glycero-3-phosphoethanolamine + CO2. It participates in phospholipid metabolism; phosphatidylethanolamine biosynthesis; phosphatidylethanolamine from CDP-diacylglycerol: step 2/2. Catalyzes the formation of phosphatidylethanolamine (PtdEtn) from phosphatidylserine (PtdSer). The chain is Phosphatidylserine decarboxylase proenzyme from Clostridium perfringens (strain ATCC 13124 / DSM 756 / JCM 1290 / NCIMB 6125 / NCTC 8237 / Type A).